Consider the following 184-residue polypeptide: MSWRSEHIWIELIAGSRKISNLCWAFILFLGSLGFFLVGTSSYLGRNLISFFPLQQIIFFPQGIVMSFYGIAGLFISSYLWCTISWNVGSGYDLFNRKEGIVCIFRWGFPGINRRIFLRFLLKDIRSVRIEVEEGIYAGRVLYMDIRGQRAIPLTRTDENLTPGEIEKKAAELAYFLRVPIEVF.

2 helical membrane passes run 19 to 39 and 57 to 77; these read ISNLCWAFILFLGSLGFFLVG and IIFFPQGIVMSFYGIAGLFIS.

This sequence belongs to the Ycf4 family.

The protein localises to the plastid thylakoid membrane. Its function is as follows. Seems to be required for the assembly of the photosystem I complex. This is Photosystem I assembly protein Ycf4 from Cuscuta exaltata (Tall dodder).